A 236-amino-acid chain; its full sequence is tRNA (guanine-N(7)-)-methyltransferase (236 aa).

Residues Asp-35, Glu-60, Asn-87, and Asp-113 each coordinate S-adenosyl-L-methionine. Residue Asp-113 is part of the active site. Substrate is bound by residues Lys-117 and Asp-149. Positions 217–236 are disordered; sequence EFEQHWQEIDNPGNAPTPDA.

Belongs to the class I-like SAM-binding methyltransferase superfamily. TrmB family.

It carries out the reaction guanosine(46) in tRNA + S-adenosyl-L-methionine = N(7)-methylguanosine(46) in tRNA + S-adenosyl-L-homocysteine. Its pathway is tRNA modification; N(7)-methylguanine-tRNA biosynthesis. Its function is as follows. Catalyzes the formation of N(7)-methylguanine at position 46 (m7G46) in tRNA. The polypeptide is tRNA (guanine-N(7)-)-methyltransferase (Synechococcus sp. (strain CC9902)).